Here is a 675-residue protein sequence, read N- to C-terminus: Methionine--tRNA ligase (675 aa).

The 'HIGH' region motif lies at 15–25 (PYANGSIHLGH). Zn(2+)-binding residues include Cys-146, Cys-149, Cys-159, and Cys-162. The short motif at 332–336 (KMSKS) is the 'KMSKS' region element. Lys-335 provides a ligand contact to ATP. Residues 573-675 (DFAKVDMRIA…SGAQPGMQVK (103 aa)) enclose the tRNA-binding domain.

This sequence belongs to the class-I aminoacyl-tRNA synthetase family. MetG type 1 subfamily. As to quaternary structure, homodimer. Requires Zn(2+) as cofactor.

It is found in the cytoplasm. It carries out the reaction tRNA(Met) + L-methionine + ATP = L-methionyl-tRNA(Met) + AMP + diphosphate. Its function is as follows. Is required not only for elongation of protein synthesis but also for the initiation of all mRNA translation through initiator tRNA(fMet) aminoacylation. This is Methionine--tRNA ligase from Yersinia pseudotuberculosis serotype I (strain IP32953).